We begin with the raw amino-acid sequence, 97 residues long: Protein Vpr (97 aa).

Residues 1 to 42 (MEQAPEDQGPQREPYNEWTLELLEELKREAVRHFPRPWLHSL) form a homooligomerization region. Phosphoserine; by host is present on residues Ser-79, Ser-95, and Ser-97.

This sequence belongs to the HIV-1 VPR protein family. In terms of assembly, homooligomer, may form homodimer. Interacts with p6-gag region of the Pr55 Gag precursor protein through a (Leu-X-X)4 motif near the C-terminus of the P6gag protein. Interacts with host UNG. May interact with host RAD23A/HHR23A. Interacts with host VPRBP/DCAF1, leading to hijack the CUL4A-RBX1-DDB1-DCAF1/VPRBP complex, mediating ubiquitination of host proteins such as TERT and ZGPAT and arrest of the cell cycle in G2 phase. Post-translationally, phosphorylated on several residues by host. These phosphorylations regulate VPR activity for the nuclear import of the HIV-1 pre-integration complex.

It localises to the virion. The protein localises to the host nucleus. It is found in the host extracellular space. During virus replication, may deplete host UNG protein, and incude G2-M cell cycle arrest. Acts by targeting specific host proteins for degradation by the 26S proteasome, through association with the cellular CUL4A-DDB1 E3 ligase complex by direct interaction with host VPRPB/DCAF-1. Cell cycle arrest reportedly occurs within hours of infection and is not blocked by antiviral agents, suggesting that it is initiated by the VPR carried into the virion. Additionally, VPR induces apoptosis in a cell cycle dependent manner suggesting that these two effects are mechanistically linked. Detected in the serum and cerebrospinal fluid of AIDS patient, VPR may also induce cell death to bystander cells. In terms of biological role, during virus entry, plays a role in the transport of the viral pre-integration (PIC) complex to the host nucleus. This function is crucial for viral infection of non-dividing macrophages. May act directly at the nuclear pore complex, by binding nucleoporins phenylalanine-glycine (FG)-repeat regions. This chain is Protein Vpr, found in Human immunodeficiency virus type 1 group M subtype B (isolate ARV2/SF2) (HIV-1).